We begin with the raw amino-acid sequence, 434 residues long: Solute carrier RCH1 (434 aa).

The Cytoplasmic segment spans residues 1–15 (MKTQYSLIRKIWAHS). Residues 16-36 (VTEFLKSQWFFICLAILIVIA) traverse the membrane as a helical segment. The Extracellular portion of the chain corresponds to 37–50 (RFAPNFARDGGLIK). The helical transmembrane segment at 51–71 (GQYSIGYGCVAWIFLQSGLGM) threads the bilayer. Residues 72-87 (KSRSLMANMLNWRAHA) are Cytoplasmic-facing. The chain crosses the membrane as a helical span at residues 88–108 (TILVLSFLITSSIVYGFCCAV). The Extracellular segment spans residues 109–118 (KAANDPKIDD). The chain crosses the membrane as a helical span at residues 119-139 (WVLIGLILTATCPTTVASNVI). At 140–149 (MTTNAGGNSL) the chain is on the cytoplasmic side. Residues 150-170 (LCVCEVFIGNLLGAFITPALV) form a helical membrane-spanning segment. Over 171-199 (QMFTNRAPFAYGNPATGNGIGALYGRVMK) the chain is Extracellular. Residues 200–220 (QVGLSVFVPLFVGQVIQNCFP) traverse the membrane as a helical segment. The Cytoplasmic segment spans residues 221–234 (KGTAYYLGFLKKYH). Residues 235–255 (IKIGSYMLLLIMFSSFSTAFY) traverse the membrane as a helical segment. Topologically, residues 256 to 264 (QDAFTSVSH) are extracellular. A helical membrane pass occupies residues 265–285 (VCIIFLCFFNLGIYIFFTGLS). The Cytoplasmic segment spans residues 286–327 (YLCARPWFILKLFPHEPIEGKSTRLYRYSYNIFRPFYYSKED). The helical transmembrane segment at 328–348 (AICIMFCGPAKTAALGVSLIT) threads the bilayer. At 349 to 362 (SQYGDKKEHLGKLL) the chain is on the extracellular side. A helical membrane pass occupies residues 363-383 (VPLVLYQVEQVMTANFFVSLF). Residues 384–434 (KRWIQKDAQADGSESSCANENEEVDLEKIISIGTGENQSVLSNNVPYTQPR) lie on the Cytoplasmic side of the membrane. Ser425 carries the phosphoserine modification.

This sequence belongs to the bile acid:sodium symporter (BASS) (TC 2.A.28) family.

It is found in the cell membrane. Its subcellular location is the bud neck. Solute carrier protein that negatively regulates the cytosolic calcium homeostasis in response to high levels of extracellular calcium. In Saccharomyces cerevisiae (strain ATCC 204508 / S288c) (Baker's yeast), this protein is Solute carrier RCH1.